An 818-amino-acid polypeptide reads, in one-letter code: G-type lectin S-receptor-like serine/threonine-protein kinase At1g67520 (818 aa).

The first 22 residues, Met-1–Ser-22, serve as a signal peptide directing secretion. Residues Glu-23–His-387 are Extracellular-facing. The Bulb-type lectin domain maps to Thr-24–Leu-149. 3 N-linked (GlcNAc...) asparagine glycosylation sites follow: Asn-123, Asn-199, and Asn-337. A PAN domain is found at Cys-290–Glu-379. Cystine bridges form between Cys-330/Cys-353 and Cys-334/Cys-340. A helical transmembrane segment spans residues Ile-388 to Leu-408. Topologically, residues Arg-409–Arg-818 are cytoplasmic. The region spanning Phe-496 to Phe-785 is the Protein kinase domain. Residues Leu-502 to Val-510 and Lys-524 each bind ATP. Ser-530 carries the phosphoserine modification. The segment at Leu-585 to Ile-602 is caM-binding. Asp-621 serves as the catalytic Proton acceptor. 2 positions are modified to phosphoserine: Ser-625 and Ser-638. Residue Thr-655 is modified to Phosphothreonine. A phosphoserine mark is found at Ser-699 and Ser-807. At Thr-813 the chain carries Phosphothreonine.

This sequence belongs to the protein kinase superfamily. Ser/Thr protein kinase family.

It localises to the cell membrane. It catalyses the reaction L-seryl-[protein] + ATP = O-phospho-L-seryl-[protein] + ADP + H(+). It carries out the reaction L-threonyl-[protein] + ATP = O-phospho-L-threonyl-[protein] + ADP + H(+). This is G-type lectin S-receptor-like serine/threonine-protein kinase At1g67520 from Arabidopsis thaliana (Mouse-ear cress).